A 147-amino-acid polypeptide reads, in one-letter code: Sec-independent protein translocase protein TatB (147 aa).

Residues 1-21 (MFDFGFSELIVIAVVTLIVVG) form a helical membrane-spanning segment. The disordered stretch occupies residues 117 to 147 (APAPMSLAPHGDAASAGREPAAVPGSGPEKA).

Belongs to the TatB family. In terms of assembly, the Tat system comprises two distinct complexes: a TatABC complex, containing multiple copies of TatA, TatB and TatC subunits, and a separate TatA complex, containing only TatA subunits. Substrates initially bind to the TatABC complex, which probably triggers association of the separate TatA complex to form the active translocon.

The protein resides in the cell inner membrane. Functionally, part of the twin-arginine translocation (Tat) system that transports large folded proteins containing a characteristic twin-arginine motif in their signal peptide across membranes. Together with TatC, TatB is part of a receptor directly interacting with Tat signal peptides. TatB may form an oligomeric binding site that transiently accommodates folded Tat precursor proteins before their translocation. This chain is Sec-independent protein translocase protein TatB, found in Aromatoleum aromaticum (strain DSM 19018 / LMG 30748 / EbN1) (Azoarcus sp. (strain EbN1)).